The sequence spans 247 residues: Retbindin (247 aa).

Positions 1-31 (MAHEGHSQHSGLVWALRPILAWIFLVACGWS) are cleaved as a signal peptide. 4 disulfides stabilise this stretch: Cys99–Cys169, Cys106–Cys146, Cys139–Cys183, and Cys152–Cys165.

Belongs to the folate receptor family. In terms of processing, not N-glycosylated. Expressed in the peripheral retina where it localizes to the inter-photoreceptor matrix (at protein level). May be produced by rod photoreceptors (at protein level).

The protein resides in the secreted. It is found in the extracellular space. Its subcellular location is the extracellular matrix. The protein localises to the interphotoreceptor matrix. It localises to the cell membrane. In terms of biological role, riboflavin-binding protein which might have a role in retinal flavin transport. The polypeptide is Retbindin (Rtbdn) (Mus musculus (Mouse)).